The sequence spans 150 residues: Group IIC secretory phospholipase A2 (150 aa).

Residues 1 to 20 form the signal peptide; sequence MKGIAIFLVFIFYWTTSTLS. Disulfide bonds link C46–C143, C48–C64, C63–C121, C69–C150, C70–C114, C79–C107, C97–C112, and C99–C105. Residues Y47, G49, and G51 each contribute to the Ca(2+) site. H67 is a catalytic residue. Ca(2+) is bound at residue D68. N92 is a glycosylation site (N-linked (GlcNAc...) asparagine). Residue D115 is part of the active site.

This sequence belongs to the phospholipase A2 family. Ca(2+) is required as a cofactor. Testis specific.

The protein localises to the secreted. The catalysed reaction is a 1,2-diacyl-sn-glycero-3-phosphocholine + H2O = a 1-acyl-sn-glycero-3-phosphocholine + a fatty acid + H(+). Its function is as follows. PA2 catalyzes the calcium-dependent hydrolysis of the 2-acyl groups in 3-sn-phosphoglycerides. Testis PA2 may be important in the production of prostaglandins, by the release of arachidonic acid, which in turn are necessary for the contractions of the seminiferous tubules and the testicular capsule; they also seem to decrease sperm transit time through the male reproductive tract. The protein is Group IIC secretory phospholipase A2 (Pla2g2c) of Mus musculus (Mouse).